The sequence spans 193 residues: uncharacterized protein (193 aa).

A coiled-coil region spans residues 86 to 181 (TKQRELLEIL…QVEEVQAEVG (96 aa)).

This is an uncharacterized protein from Streptococcus pyogenes serotype M6 (strain ATCC BAA-946 / MGAS10394).